A 345-amino-acid chain; its full sequence is UDP-3-O-acylglucosamine N-acyltransferase (345 aa).

H253 (proton acceptor) is an active-site residue.

Belongs to the transferase hexapeptide repeat family. LpxD subfamily. As to quaternary structure, homotrimer.

The catalysed reaction is a UDP-3-O-[(3R)-3-hydroxyacyl]-alpha-D-glucosamine + a (3R)-hydroxyacyl-[ACP] = a UDP-2-N,3-O-bis[(3R)-3-hydroxyacyl]-alpha-D-glucosamine + holo-[ACP] + H(+). Its pathway is bacterial outer membrane biogenesis; LPS lipid A biosynthesis. Functionally, catalyzes the N-acylation of UDP-3-O-acylglucosamine using 3-hydroxyacyl-ACP as the acyl donor. Is involved in the biosynthesis of lipid A, a phosphorylated glycolipid that anchors the lipopolysaccharide to the outer membrane of the cell. The chain is UDP-3-O-acylglucosamine N-acyltransferase from Rickettsia massiliae (strain Mtu5).